A 152-amino-acid polypeptide reads, in one-letter code: Protein SprT-like (152 aa).

The SprT-like domain maps to 7 to 148 (QRLVEEVSLQ…GKCKGKLNLI (142 aa)). His67 contributes to the Zn(2+) binding site. The active site involves Glu68. Position 71 (His71) interacts with Zn(2+).

The protein belongs to the SprT family. Zn(2+) serves as cofactor.

The protein localises to the cytoplasm. This Bacillus anthracis (strain A0248) protein is Protein SprT-like.